Consider the following 112-residue polypeptide: 2Fe-2S ferredoxin (112 aa).

Residues 5 to 107 (IKVTFIINDG…GIKVRLPSAT (103 aa)) enclose the 2Fe-2S ferredoxin-type domain. Cysteine 42, cysteine 48, cysteine 51, and cysteine 88 together coordinate [2Fe-2S] cluster.

It belongs to the adrenodoxin/putidaredoxin family. The cofactor is [2Fe-2S] cluster.

Functionally, ferredoxin are iron-sulfur proteins that transfer electrons in a wide variety of metabolic reactions. This is 2Fe-2S ferredoxin (fdxB) from Rickettsia montanensis.